The primary structure comprises 210 residues: Probable septum site-determining protein MinC (210 aa).

It belongs to the MinC family. As to quaternary structure, interacts with MinD and FtsZ.

Cell division inhibitor that blocks the formation of polar Z ring septums. Rapidly oscillates between the poles of the cell to destabilize FtsZ filaments that have formed before they mature into polar Z rings. Prevents FtsZ polymerization. This is Probable septum site-determining protein MinC from Thermotoga neapolitana (strain ATCC 49049 / DSM 4359 / NBRC 107923 / NS-E).